A 452-amino-acid chain; its full sequence is Bifunctional protein GlmU (452 aa).

The segment at 1–226 (MVAVAILAAG…SQEILGINDR (226 aa)) is pyrophosphorylase. UDP-N-acetyl-alpha-D-glucosamine contacts are provided by residues 7-10 (LAAG), Lys21, Gln73, and 78-79 (GT). Asp103 contacts Mg(2+). UDP-N-acetyl-alpha-D-glucosamine contacts are provided by Gly140, Glu155, Asn170, and Asn224. Position 224 (Asn224) interacts with Mg(2+). The linker stretch occupies residues 227-247 (LQLADSFRILQERIRQQWMLA). The interval 248–452 (GVTLVDPTSI…ENWSTPTTEQ (205 aa)) is N-acetyltransferase. Positions 329 and 347 each coordinate UDP-N-acetyl-alpha-D-glucosamine. The active-site Proton acceptor is the His359. 2 residues coordinate UDP-N-acetyl-alpha-D-glucosamine: Tyr362 and Asn373. Residues Ala376, 382–383 (NY), Ala419, and Arg436 each bind acetyl-CoA.

In the N-terminal section; belongs to the N-acetylglucosamine-1-phosphate uridyltransferase family. The protein in the C-terminal section; belongs to the transferase hexapeptide repeat family. As to quaternary structure, homotrimer. It depends on Mg(2+) as a cofactor.

The protein resides in the cytoplasm. It carries out the reaction alpha-D-glucosamine 1-phosphate + acetyl-CoA = N-acetyl-alpha-D-glucosamine 1-phosphate + CoA + H(+). It catalyses the reaction N-acetyl-alpha-D-glucosamine 1-phosphate + UTP + H(+) = UDP-N-acetyl-alpha-D-glucosamine + diphosphate. It functions in the pathway nucleotide-sugar biosynthesis; UDP-N-acetyl-alpha-D-glucosamine biosynthesis; N-acetyl-alpha-D-glucosamine 1-phosphate from alpha-D-glucosamine 6-phosphate (route II): step 2/2. It participates in nucleotide-sugar biosynthesis; UDP-N-acetyl-alpha-D-glucosamine biosynthesis; UDP-N-acetyl-alpha-D-glucosamine from N-acetyl-alpha-D-glucosamine 1-phosphate: step 1/1. The protein operates within bacterial outer membrane biogenesis; LPS lipid A biosynthesis. Functionally, catalyzes the last two sequential reactions in the de novo biosynthetic pathway for UDP-N-acetylglucosamine (UDP-GlcNAc). The C-terminal domain catalyzes the transfer of acetyl group from acetyl coenzyme A to glucosamine-1-phosphate (GlcN-1-P) to produce N-acetylglucosamine-1-phosphate (GlcNAc-1-P), which is converted into UDP-GlcNAc by the transfer of uridine 5-monophosphate (from uridine 5-triphosphate), a reaction catalyzed by the N-terminal domain. The chain is Bifunctional protein GlmU from Synechococcus sp. (strain ATCC 27144 / PCC 6301 / SAUG 1402/1) (Anacystis nidulans).